Consider the following 129-residue polypeptide: MLISKRIVMSITNEQILDAVADMSVMQVVELIEAMEEKFGVTAAAAVVAGGAAAEAAEEQTEFDVILTAVGAQKVQVIKAVRGATGLGLKEAKAVVDSAPASVKEGVDKAEAEALKAQLEEVGASVEIK.

It belongs to the bacterial ribosomal protein bL12 family. Homodimer. Part of the ribosomal stalk of the 50S ribosomal subunit. Forms a multimeric L10(L12)X complex, where L10 forms an elongated spine to which 2 to 4 L12 dimers bind in a sequential fashion. Binds GTP-bound translation factors.

In terms of biological role, forms part of the ribosomal stalk which helps the ribosome interact with GTP-bound translation factors. Is thus essential for accurate translation. The sequence is that of Large ribosomal subunit protein bL12 from Photobacterium profundum (strain SS9).